The sequence spans 435 residues: Ras association domain-containing protein 9 (435 aa).

The segment at 1-22 (MAPFGRNLLKTRHKNRSPTKDM) is disordered. Positions 25 to 119 (EEKEIVVWVC…MQFVLVKTDA (95 aa)) constitute a Ras-associating domain. Residues 195-291 (HTIHQQVQRM…KLSAEIEREV (97 aa)) adopt a coiled-coil conformation. A disordered region spans residues 371-423 (SKDGCQGKENRGKEAEASSSNGEIPPLTQRVFNTYTNDTDSDTGISSNHSQDS). Residues 375–386 (CQGKENRGKEAE) show a composition bias toward basic and acidic residues. A compositionally biased stretch (polar residues) spans 400-423 (RVFNTYTNDTDSDTGISSNHSQDS).

As to quaternary structure, interacts with PAM. As to expression, testis, kidney, skeletal muscle, liver, lung, brain, heart, pituitary gland, adrenal gland and ovary.

The protein resides in the endosome. May play a role in regulating vesicuar trafficking in cells. The polypeptide is Ras association domain-containing protein 9 (Rassf9) (Rattus norvegicus (Rat)).